A 245-amino-acid polypeptide reads, in one-letter code: Carboxymethylenebutenolidase homolog (245 aa).

N-acetylalanine is present on A2. Catalysis depends on residues C132, D179, and H212. At S223 the chain carries Phosphoserine.

This sequence belongs to the dienelactone hydrolase family.

The protein resides in the cytoplasm. The protein localises to the cytosol. Its function is as follows. Cysteine hydrolase. This chain is Carboxymethylenebutenolidase homolog (Cmbl), found in Mus musculus (Mouse).